We begin with the raw amino-acid sequence, 437 residues long: Enolase superfamily member DDB_G0284701 (437 aa).

Lysine 217 (proton acceptor) is an active-site residue. Residues aspartate 251, glutamate 279, and aspartate 321 each coordinate Mn(2+). Aspartate 395 serves as the catalytic Proton donor.

It belongs to the mandelate racemase/muconate lactonizing enzyme family.

The sequence is that of Enolase superfamily member DDB_G0284701 from Dictyostelium discoideum (Social amoeba).